The primary structure comprises 224 residues: Heme response regulator HssR (224 aa).

One can recognise a Response regulatory domain in the interval 3–116; it reads QCLVVDDDPR…ELIFRIRAVL (114 aa). A 4-aspartylphosphate modification is found at Asp52. Positions 124–222 form a DNA-binding region, ompR/PhoB-type; it reads NSEMTIGNLT…VRGQGYKVEN (99 aa).

In terms of processing, phosphorylated by HssS.

It localises to the cytoplasm. In terms of biological role, member of the two-component regulatory system HssS/HssR involved in intracellular heme homeostasis and tempering of staphylococcal virulence. Phosphorylated HssR binds to a direct repeat sequence within hrtAB promoter and activates the expression of hrtAB, an efflux pump, in response to extracellular heme, hemin, hemoglobin or blood. The sequence is that of Heme response regulator HssR (hssR) from Staphylococcus aureus (strain COL).